The primary structure comprises 101 residues: Large ribosomal subunit protein uL23 (101 aa).

The protein belongs to the universal ribosomal protein uL23 family. As to quaternary structure, part of the 50S ribosomal subunit. Contacts protein L29, and trigger factor when it is bound to the ribosome.

Its function is as follows. One of the early assembly proteins it binds 23S rRNA. One of the proteins that surrounds the polypeptide exit tunnel on the outside of the ribosome. Forms the main docking site for trigger factor binding to the ribosome. This chain is Large ribosomal subunit protein uL23, found in Corynebacterium kroppenstedtii (strain DSM 44385 / JCM 11950 / CIP 105744 / CCUG 35717).